A 192-amino-acid chain; its full sequence is VQ motif-containing protein 22 (192 aa).

A compositionally biased stretch (low complexity) spans 24-38 (ASTAVTTTTAGDTTS). Residues 24–65 (ASTAVTTTTAGDTTSIDSRLSPETGRVTKPTRRRSRASRRTP) form a disordered region. Basic residues predominate over residues 52 to 62 (KPTRRRSRASR). Positions 76–85 (FRAMVQQYTG) match the VQ motif. 2 disordered regions span residues 101-135 (FSLT…PQRP) and 163-192 (FGTV…SRLQ). 2 stretches are compositionally biased toward low complexity: residues 102-114 (SLTS…AGSS) and 175-192 (APSS…SRLQ).

The protein localises to the nucleus. Its function is as follows. May function as positive regulator of plant growth. This is VQ motif-containing protein 22 from Arabidopsis thaliana (Mouse-ear cress).